Reading from the N-terminus, the 171-residue chain is UPF0303 protein YPK_1581 (171 aa).

The protein belongs to the UPF0303 family.

The protein is UPF0303 protein YPK_1581 of Yersinia pseudotuberculosis serotype O:3 (strain YPIII).